The primary structure comprises 405 residues: MENFQFEDLSPNKVSKVYQDLKKFGSFLYNHKMGVFLVSFSSGVAYLYHNITQSHKRKQIKLAKERVMTYFESTQKLSEREVDAIITKFIDENKILDKIQTPSLASIRSEKDPSEKLKLTDQLKVSIITKLFSVLYIIPMVTIFNRLQINLIGKYCYLDYVLYKDQEQHSMRLINQQTESNFINSRNNCYFFKDINFSQFINLIQEQIKISLKDWKIDQQSSFEGFLKLLINIRNNFEKKEIIASISSDNSLLKYLIPTEEEIDNLVQSQKTPENDNDIEYQNLKMLYNEIRNIFESQKFYDVLKDSINQSFLEFTKNLREDFESTELKKQIDSIVLPDLPIEMEIPKPLVTMHNIILLPKINKQIGNIIVNKKSIIEKIGSTDLINQLNYSVLTNDLDFNKVQF.

Residues 1–26 (MENFQFEDLSPNKVSKVYQDLKKFGS) are Cytoplasmic-facing. A helical membrane pass occupies residues 27–49 (FLYNHKMGVFLVSFSSGVAYLYH). Residues 50–124 (NITQSHKRKQ…EKLKLTDQLK (75 aa)) are Peroxisomal-facing. The helical transmembrane segment at 125–144 (VSIITKLFSVLYIIPMVTIF) threads the bilayer. Topologically, residues 145-405 (NRLQINLIGK…NDLDFNKVQF (261 aa)) are cytoplasmic.

This sequence belongs to the peroxin-3 family.

It localises to the peroxisome membrane. Functionally, involved in peroxisome biosynthesis. In Dictyostelium discoideum (Social amoeba), this protein is Peroxisome biogenesis factor 3 (pex3).